The sequence spans 201 residues: 3-mercaptopropionate dioxygenase (201 aa).

Residues histidine 89, histidine 91, and histidine 142 each contribute to the Fe cation site.

Belongs to the cysteine dioxygenase family. In terms of assembly, forms homodimer in the crystal; however, there is no evidence that the dimer exists under physiological conditions or has biological significance. Requires Fe(2+) as cofactor.

The enzyme catalyses 3-sulfanylpropanoate + O2 = 3-sulfinopropanoate + H(+). In terms of biological role, thiol dioxygenase that catalyzes the dioxygenation of 3-mercaptopropionate (3-MPA) to 3-sulfinopropionate (3-SPA). To a lesser extent (40-fold lower efficiency), is also able to oxidize cysteine to cysteine sulfinate (CSA). Cannot use N-acetyl-L-cysteine, homocysteine, and cysteamine as substrates. The physiological role of this enzyme is unclear. The polypeptide is 3-mercaptopropionate dioxygenase (Pseudomonas aeruginosa (strain ATCC 15692 / DSM 22644 / CIP 104116 / JCM 14847 / LMG 12228 / 1C / PRS 101 / PAO1)).